Here is a 259-residue protein sequence, read N- to C-terminus: Ribosomal RNA small subunit methyltransferase A (259 aa).

S-adenosyl-L-methionine contacts are provided by asparagine 13, leucine 15, glycine 40, glutamate 61, aspartate 85, and asparagine 103.

It belongs to the class I-like SAM-binding methyltransferase superfamily. rRNA adenine N(6)-methyltransferase family. RsmA subfamily.

It localises to the cytoplasm. The enzyme catalyses adenosine(1518)/adenosine(1519) in 16S rRNA + 4 S-adenosyl-L-methionine = N(6)-dimethyladenosine(1518)/N(6)-dimethyladenosine(1519) in 16S rRNA + 4 S-adenosyl-L-homocysteine + 4 H(+). Its function is as follows. Specifically dimethylates two adjacent adenosines (A1518 and A1519) in the loop of a conserved hairpin near the 3'-end of 16S rRNA in the 30S particle. May play a critical role in biogenesis of 30S subunits. This chain is Ribosomal RNA small subunit methyltransferase A, found in Neisseria gonorrhoeae (strain NCCP11945).